We begin with the raw amino-acid sequence, 330 residues long: Aspartate--ammonia ligase (330 aa).

The protein belongs to the class-II aminoacyl-tRNA synthetase family. AsnA subfamily.

The protein localises to the cytoplasm. The catalysed reaction is L-aspartate + NH4(+) + ATP = L-asparagine + AMP + diphosphate + H(+). Its pathway is amino-acid biosynthesis; L-asparagine biosynthesis; L-asparagine from L-aspartate (ammonia route): step 1/1. This Escherichia coli O45:K1 (strain S88 / ExPEC) protein is Aspartate--ammonia ligase.